The chain runs to 220 residues: UPF0319 protein YccT (220 aa).

Residues Met1 to Ala20 form the signal peptide.

It belongs to the UPF0319 family.

This Salmonella choleraesuis (strain SC-B67) protein is UPF0319 protein YccT.